The sequence spans 362 residues: GTP cyclohydrolase FolE2 (362 aa).

The protein belongs to the GTP cyclohydrolase IV family.

It carries out the reaction GTP + H2O = 7,8-dihydroneopterin 3'-triphosphate + formate + H(+). Its pathway is cofactor biosynthesis; 7,8-dihydroneopterin triphosphate biosynthesis; 7,8-dihydroneopterin triphosphate from GTP: step 1/1. Its function is as follows. Converts GTP to 7,8-dihydroneopterin triphosphate. This is GTP cyclohydrolase FolE2 from Jannaschia sp. (strain CCS1).